We begin with the raw amino-acid sequence, 220 residues long: Probable nicotinate-nucleotide adenylyltransferase (220 aa).

Belongs to the NadD family.

It carries out the reaction nicotinate beta-D-ribonucleotide + ATP + H(+) = deamido-NAD(+) + diphosphate. It functions in the pathway cofactor biosynthesis; NAD(+) biosynthesis; deamido-NAD(+) from nicotinate D-ribonucleotide: step 1/1. In terms of biological role, catalyzes the reversible adenylation of nicotinate mononucleotide (NaMN) to nicotinic acid adenine dinucleotide (NaAD). This chain is Probable nicotinate-nucleotide adenylyltransferase, found in Saccharophagus degradans (strain 2-40 / ATCC 43961 / DSM 17024).